Reading from the N-terminus, the 327-residue chain is Tryptophan--tRNA ligase (327 aa).

Residues 9 to 11 (QPS) and 17 to 18 (GN) each bind ATP. Residues 10-18 (PSGTLTLGN) carry the 'HIGH' region motif. Asp-132 provides a ligand contact to L-tryptophan. Residues 144 to 146 (GDD), Ile-183, and 192 to 196 (KMSKS) each bind ATP. Residues 192-196 (KMSKS) carry the 'KMSKS' region motif.

The protein belongs to the class-I aminoacyl-tRNA synthetase family. Homodimer.

Its subcellular location is the cytoplasm. The enzyme catalyses tRNA(Trp) + L-tryptophan + ATP = L-tryptophyl-tRNA(Trp) + AMP + diphosphate + H(+). Its function is as follows. Catalyzes the attachment of tryptophan to tRNA(Trp). The chain is Tryptophan--tRNA ligase from Oceanobacillus iheyensis (strain DSM 14371 / CIP 107618 / JCM 11309 / KCTC 3954 / HTE831).